We begin with the raw amino-acid sequence, 118 residues long: NADH-ubiquinone oxidoreductase chain 3 (118 aa).

The next 3 helical transmembrane spans lie at 7–27, 62–82, and 87–107; these read ICIS…VPFL, LVSI…PWAV, and IDLF…IGFL.

The protein belongs to the complex I subunit 3 family.

It localises to the mitochondrion membrane. It catalyses the reaction a ubiquinone + NADH + 5 H(+)(in) = a ubiquinol + NAD(+) + 4 H(+)(out). Its function is as follows. Core subunit of the mitochondrial membrane respiratory chain NADH dehydrogenase (Complex I) that is believed to belong to the minimal assembly required for catalysis. Complex I functions in the transfer of electrons from NADH to the respiratory chain. The immediate electron acceptor for the enzyme is believed to be ubiquinone. The polypeptide is NADH-ubiquinone oxidoreductase chain 3 (ND3) (Oenothera berteroana (Bertero's evening primrose)).